Consider the following 1748-residue polypeptide: MNVMGFNTDRLAWTRNKLRGFYFAKLYYEAKEYDLAKKYVCTYLSVQERDPRAHRFLGLLYELEENTEKAVECYRRSLELNPPQKDLVLKIAELLCKNDVTDGRAKYWVERAAKLFPGSPAIYKLKEHLLDCEGEDGWNKLFDWIQSELYVRPDDVHMNIRLVELYRSNKRLKDAVARCHEAERNIALRSSLEWNSCVVQTLKEYLESLQCLESDKSDWRATNTDLLLAYANLMLLTLSTRDVQESRELLESFDSALQSAKSSLGGNDELSATFLEMKGHFYMHAGSLLLKMGQHGNNVQWQALSELAALCYVIAFQVPRPKIKLIKGEAGQNLLEMMACDRLSQSGHMLLNLSRGKQDFLKEVVETFANKSGQSVLYNALFSSQSSKDTSFLGSDDIGNIDVQEPELEDLARYDVGAIQAHNGSLQHLTWLGLQWNSLPALPGIRKWLKQLFHHLPQETSRLETNAPESICILDLEVFLLGVVYTSHLQLKEKCNSHHSSYQPLCLPLPVCKRLCTERQKSWWDAVCTLIHRKAVPGNSAELRLVVQHEINTLRAQEKHGLQPALLVHWAKCLQKMGRGLNSSYDQQEYIGRSVHYWKKVLPLLKIIKKNSIPEPIDPLFKHFHSVDIQASEIVEYEEDAHITFAILDAVHGNIEDAVTAFESIKSVVSYWNLALIFHRKAEDIENDAVFPEEQEECKNYLRKTRDYLIKIIDDSDSNLSVVKKLPVPLESVKEMLKSVMQELEDYSEGGPLYKNGSLRNADSEIKHSTPSPTKYSLSPSKSYKYSPKTPPRWAEDQNSLRKMICQEVKAITKLNSSKSASRHRWPTENYGPDSVPDGYQGSQTFHGAPLTVATTGPSVYYSQSPAYNSQYLLRPAANVTPTKGSSNTEFKSTKEGFSIAVSADGFKFGISEPGNQEKKSEKPLENDTGFQAQDISGQKNGRGVIFGQTSSTFTFADVAKSTSGEGFQFGKKDPNFKGFSGAGEKLFSSQCGKMANKANTSGDFEKDDDACKTEDSDDIHFEPVVQMPEKVELVTGEEGEKVLYSQGVKLFRFDAEISQWKERGLGNLKILKNEVNGKPRMLMRRDQVLKVCANHWITTTMNLKPLSGSDRAWMWLASDFSDGDAKLERLAAQFKTPELAEEFKQKFEECQRLLLDIPLQTPHKLVDTGRAAKLIQRAEEMKSGLKDFKTFLTNDQTKVTEEENKGSGTGAAGASDTTIKPNPENTGPTLEWDNYDLREDALDDNVSSSSVHDSPLASSPVRKNIFRFDESTTGFNFSFKSALSLSKSPAKLNQSGTSVGTDEESDVTQEEERDGQYFEPVVPLPDLVEVSSGEENEQVVFSHRAELYRYDKDVGQWKERGIGDIKILQNYDNKQVRIVMRRDQVLKLCANHRITPDMSLQNMKGTERVWVWTACDFADGERKVEHLAVRFKLQDVADSFKKIFDEAKTAQEKDSLITPHVSRSSTPRESPCGKIAVAVLEETTRERTDVIQGDDVADAASEVEVSSTSETTTKAVVSPPKFVFGSESVKRIFSSEKSNPFAFGNSSATGSLFGFSFNAPLKSNDSETSSVAQSGSESKVEPKKCELSKNSDIEQSSDSKVKNLSASFPMEESSINYTFKTPEKEPPLWHAEFTKEELVQKLSSTTKSADQLNGLLRETEATSAVLMEQIKLLKSEIRRLERNQEESAANVEHLKNVLLQFIFLKPGSERESLLPVINTMLQLSPEEKGKLAAVAQGLQETSIPKKK.

A Phosphothreonine modification is found at threonine 14. 3 TPR repeats span residues 51–84, 575–608, and 639–672; these read PRAH…NPPQ, QKMG…LKII, and EDAH…VSYW. The segment at 751-796 is disordered; it reads GPLYKNGSLRNADSEIKHSTPSPTKYSLSPSKSYKYSPKTPPRWAE. Residues 769–788 show a composition bias toward low complexity; that stretch reads STPSPTKYSLSPSKSYKYSP. Residues 1021 to 1157 form the RanBD1 1 domain; sequence HFEPVVQMPE…FEECQRLLLD (137 aa). 2 disordered regions span residues 1198-1233 and 1291-1316; these read TKVT…TLEW and AKLN…ERDG. A compositionally biased stretch (polar residues) spans 1220 to 1229; sequence IKPNPENTGP. Positions 1302 to 1314 are enriched in acidic residues; the sequence is TDEESDVTQEEER. A RanBD1 2 domain is found at 1318-1454; that stretch reads YFEPVVPLPD…FDEAKTAQEK (137 aa). Over residues 1565-1578 the composition is skewed to polar residues; it reads NDSETSSVAQSGSE. Positions 1565-1606 are disordered; sequence NDSETSSVAQSGSESKVEPKKCELSKNSDIEQSSDSKVKNLS. Basic and acidic residues predominate over residues 1579 to 1602; sequence SKVEPKKCELSKNSDIEQSSDSKV. Residues 1685–1735 form the GRIP domain; sequence QEESAANVEHLKNVLLQFIFLKPGSERESLLPVINTMLQLSPEEKGKLAAV.

The sequence is that of RANBP2-like and GRIP domain-containing protein 1 (RGPD1) from Homo sapiens (Human).